We begin with the raw amino-acid sequence, 202 residues long: Imidazoleglycerol-phosphate dehydratase (202 aa).

It belongs to the imidazoleglycerol-phosphate dehydratase family.

It localises to the cytoplasm. It catalyses the reaction D-erythro-1-(imidazol-4-yl)glycerol 3-phosphate = 3-(imidazol-4-yl)-2-oxopropyl phosphate + H2O. The protein operates within amino-acid biosynthesis; L-histidine biosynthesis; L-histidine from 5-phospho-alpha-D-ribose 1-diphosphate: step 6/9. This chain is Imidazoleglycerol-phosphate dehydratase, found in Synechococcus sp. (strain WH7803).